Consider the following 112-residue polypeptide: uncharacterized protein (112 aa).

Residues 1–21 (MKTLFTSVVLCGALVVSSSFA) form the signal peptide. 2 HhH domains span residues 49 to 79 (DKLNINTATASEIQKSLTGIGAKKAEAIVQY) and 80 to 109 (REKHGNFXNAEQLLEVQGIGKATLEKNRDR).

This is an uncharacterized protein from Haemophilus influenzae (strain ATCC 51907 / DSM 11121 / KW20 / Rd).